A 441-amino-acid chain; its full sequence is Chromosome partition protein MukF (441 aa).

The tract at residues 208–236 (LTETSSTLRELQDTLEAAGDKLQTSLLSI) is leucine-zipper.

Belongs to the MukF family. In terms of assembly, interacts, and probably forms a ternary complex, with MukE and MukB via its C-terminal region. The complex formation is stimulated by calcium or magnesium. It is required for an interaction between MukE and MukB.

The protein localises to the cytoplasm. It localises to the nucleoid. In terms of biological role, involved in chromosome condensation, segregation and cell cycle progression. May participate in facilitating chromosome segregation by condensation DNA from both sides of a centrally located replisome during cell division. Not required for mini-F plasmid partitioning. Probably acts via its interaction with MukB and MukE. Overexpression results in anucleate cells. It has a calcium binding activity. The polypeptide is Chromosome partition protein MukF (Pectobacterium atrosepticum (strain SCRI 1043 / ATCC BAA-672) (Erwinia carotovora subsp. atroseptica)).